The chain runs to 92 residues: Large ribosomal subunit protein eL37 (92 aa).

Residues Cys-19, Cys-22, Cys-34, and Cys-37 each contribute to the Zn(2+) site. Residues 19–37 (CRRCGRSSYHIQKSKCAQC) form a C4-type zinc finger.

It belongs to the eukaryotic ribosomal protein eL37 family. Zn(2+) serves as cofactor.

Its function is as follows. Binds to the 23S rRNA. This Spodoptera frugiperda (Fall armyworm) protein is Large ribosomal subunit protein eL37 (RpL37).